A 253-amino-acid chain; its full sequence is VTSITLDLVNPTAGQYSSFVDKIRNNVKDPNLKYGGTDIAVIGPPSKEKFLRINFQSSRGTVSLGLKRDNLYVVAYLAMDNTNVNRAYYFRSEITSAELTALFPEATTANQKALEYTEDYQSIEKNAQITQGDKSRKELGLGIDLLLTSMEAVNKKARVVKNEARFLLIAIQMTAEVARFRYIQNLVTKNFPNKFDSDNKVIQFEVSWRKISTAIYGDAKNGVFNKDYDFGFGKVRQVKDLQMGLLMYLGKPK.

Glutamate 176 is a catalytic residue.

It belongs to the ribosome-inactivating protein family. Type 1 RIP subfamily.

The enzyme catalyses Endohydrolysis of the N-glycosidic bond at one specific adenosine on the 28S rRNA.. Functionally, ribosome-inactivating protein of type 1, inhibits protein synthesis in animal cells. The protein is Ribosome-inactivating protein saporin-5 (SAP5) of Saponaria officinalis (Common soapwort).